A 143-amino-acid chain; its full sequence is Class I hydrophobin 20 (143 aa).

The first 22 residues, 1–22 (MLSHPMKLLFFVFALSALLAAA), serve as a signal peptide directing secretion. 4 disulfides stabilise this stretch: Cys-54–Cys-123, Cys-62–Cys-117, Cys-63–Cys-102, and Cys-124–Cys-137.

Belongs to the fungal hydrophobin family. Self-assembles to form functional amyloid fibrils called rodlets. Self-assembly into fibrillar rodlets occurs spontaneously at hydrophobic:hydrophilic interfaces and the rodlets further associate laterally to form amphipathic monolayers.

It is found in the secreted. Its subcellular location is the cell wall. Functionally, aerial growth, conidiation, and dispersal of filamentous fungi in the environment rely upon a capability of their secreting small amphipathic proteins called hydrophobins (HPBs) with low sequence identity. Class I can self-assemble into an outermost layer of rodlet bundles on aerial cell surfaces, conferring cellular hydrophobicity that supports fungal growth, development and dispersal; whereas Class II form highly ordered films at water-air interfaces through intermolecular interactions but contribute nothing to the rodlet structure. Hydph20 is a class I hydrophobin involved in mycelial growth. The polypeptide is Class I hydrophobin 20 (Pleurotus ostreatus (strain PC15) (Oyster mushroom)).